The primary structure comprises 383 residues: tRNA-specific 2-thiouridylase MnmA (383 aa).

ATP contacts are provided by residues 30–37 (GMSGGVDS) and Met-56. The tract at residues 116-118 (NPD) is interaction with target base in tRNA. Cys-121 (nucleophile) is an active-site residue. Cys-121 and Cys-218 are oxidised to a cystine. Gly-146 contributes to the ATP binding site. Positions 168–170 (KDQ) are interaction with tRNA. The Cysteine persulfide intermediate role is filled by Cys-218. The segment at 330 to 331 (RY) is interaction with tRNA.

Belongs to the MnmA/TRMU family.

Its subcellular location is the cytoplasm. It carries out the reaction S-sulfanyl-L-cysteinyl-[protein] + uridine(34) in tRNA + AH2 + ATP = 2-thiouridine(34) in tRNA + L-cysteinyl-[protein] + A + AMP + diphosphate + H(+). Catalyzes the 2-thiolation of uridine at the wobble position (U34) of tRNA, leading to the formation of s(2)U34. This Haemophilus influenzae (strain ATCC 51907 / DSM 11121 / KW20 / Rd) protein is tRNA-specific 2-thiouridylase MnmA.